Consider the following 156-residue polypeptide: Cytochrome c-type biogenesis protein CcmE 2 (156 aa).

Over 1–8 (MNPQRRRR) the chain is Cytoplasmic. The helical; Signal-anchor for type II membrane protein transmembrane segment at 9 to 29 (LWLVLALVLAGGLATTLVAMA) threads the bilayer. At 30–156 (LQRNVAYLYT…AAAGQVGERQ (127 aa)) the chain is on the periplasmic side. Residues H123 and Y127 each coordinate heme. The tract at residues 136–156 (MGSAHRKHDVPAAAGQVGERQ) is disordered.

It belongs to the CcmE/CycJ family.

It is found in the cell inner membrane. Functionally, heme chaperone required for the biogenesis of c-type cytochromes. Transiently binds heme delivered by CcmC and transfers the heme to apo-cytochromes in a process facilitated by CcmF and CcmH. This chain is Cytochrome c-type biogenesis protein CcmE 2, found in Xanthomonas axonopodis pv. citri (strain 306).